Reading from the N-terminus, the 127-residue chain is Small ribosomal subunit protein uS13 (127 aa).

The interval 97–127 (PVRGQRTRTNARTRRGGRKTVAGKKKAAAKK) is disordered. Over residues 101 to 127 (QRTRTNARTRRGGRKTVAGKKKAAAKK) the composition is skewed to basic residues.

This sequence belongs to the universal ribosomal protein uS13 family. In terms of assembly, part of the 30S ribosomal subunit. Forms a loose heterodimer with protein S19. Forms two bridges to the 50S subunit in the 70S ribosome.

Its function is as follows. Located at the top of the head of the 30S subunit, it contacts several helices of the 16S rRNA. In the 70S ribosome it contacts the 23S rRNA (bridge B1a) and protein L5 of the 50S subunit (bridge B1b), connecting the 2 subunits; these bridges are implicated in subunit movement. Contacts the tRNAs in the A and P-sites. The protein is Small ribosomal subunit protein uS13 of Gloeobacter violaceus (strain ATCC 29082 / PCC 7421).